The chain runs to 551 residues: MEMTRTVRAPRGTQLSCKGWQQEAALRMLMNNLDPEVAERPEELVVYGGSGKAARSWEAFDAIVKALRSLEDDETLLVQSGKPVAIFRTHRMAPRVLIANSNLVARWATWEHFWELERKGLMMFGQMTAGSWIYIGTQGILQGTYETFAEAARQHFGGSLKGRLALTAGLGGMGGAQPLAVTMNEGVAIVVEVDEARIQRRLDHRYLDRMTRSLDEALAWARESMAKGEPLSIGLLGNAATIYPEIVRRGVIPDVVTDQTSAHDPLNGYIPEGLSVQEAAKLRKADPDEYIRRAKASIVKHVQAMLDMQKAGAVVFDYGNNIRQQAYEEGLKDAFAFPGFVPAFIRPLFCEGKGPFRWVALSGDPEDIYKTDRAIMELFPENQSLRRWLEMAQKKVHFQGLPARICWLGYGERVKAGLKFNEMVASGELKAPIVIGRDHLDAGSVASPNRETEAMKDGSDAVADWPLLNALVNTAAGATWVSIHHGGGVGIGYSQHAGMVVVADGTEEARVRLERVLTTDPGMGVVRHVDAGYEKALQVARERGIRLPMYE.

Residues 48–49, Gln-126, 172–174, Glu-192, Arg-197, 238–239, 259–263, 269–270, and Tyr-318 each bind NAD(+); these read GG, GMG, NA, QTSAH, and YI. Residue Cys-406 is part of the active site. Residue Gly-488 coordinates NAD(+).

This sequence belongs to the urocanase family. NAD(+) is required as a cofactor.

It is found in the cytoplasm. It carries out the reaction 4-imidazolone-5-propanoate = trans-urocanate + H2O. The protein operates within amino-acid degradation; L-histidine degradation into L-glutamate; N-formimidoyl-L-glutamate from L-histidine: step 2/3. In terms of biological role, catalyzes the conversion of urocanate to 4-imidazolone-5-propionate. This chain is Urocanate hydratase, found in Symbiobacterium thermophilum (strain DSM 24528 / JCM 14929 / IAM 14863 / T).